A 548-amino-acid polypeptide reads, in one-letter code: Hydroxylamine reductase (548 aa).

[4Fe-4S] cluster-binding residues include cysteine 3, cysteine 6, cysteine 15, and cysteine 21. Positions 239, 263, 307, 401, 429, 454, 489, and 491 each coordinate hybrid [4Fe-2O-2S] cluster. Cysteine 401 is modified (cysteine persulfide).

It belongs to the HCP family. [4Fe-4S] cluster serves as cofactor. It depends on hybrid [4Fe-2O-2S] cluster as a cofactor.

It is found in the cytoplasm. It catalyses the reaction A + NH4(+) + H2O = hydroxylamine + AH2 + H(+). Its function is as follows. Catalyzes the reduction of hydroxylamine to form NH(3) and H(2)O. In Desulfosudis oleivorans (strain DSM 6200 / JCM 39069 / Hxd3) (Desulfococcus oleovorans), this protein is Hydroxylamine reductase.